Here is a 287-residue protein sequence, read N- to C-terminus: ATP synthase gamma chain (287 aa).

This sequence belongs to the ATPase gamma chain family. F-type ATPases have 2 components, CF(1) - the catalytic core - and CF(0) - the membrane proton channel. CF(1) has five subunits: alpha(3), beta(3), gamma(1), delta(1), epsilon(1). CF(0) has three main subunits: a, b and c.

Its subcellular location is the cell inner membrane. Its function is as follows. Produces ATP from ADP in the presence of a proton gradient across the membrane. The gamma chain is believed to be important in regulating ATPase activity and the flow of protons through the CF(0) complex. The sequence is that of ATP synthase gamma chain from Escherichia fergusonii (strain ATCC 35469 / DSM 13698 / CCUG 18766 / IAM 14443 / JCM 21226 / LMG 7866 / NBRC 102419 / NCTC 12128 / CDC 0568-73).